The sequence spans 1606 residues: Phosphatidylinositol 3,4,5-trisphosphate-dependent Rac exchanger 2 protein (1606 aa).

The DH domain occupies 23–214 (LRVCVLSELQ…KAVCSNINEA (192 aa)). The region spanning 245 to 361 (EMLMCGVLLK…WFEAILKERE (117 aa)) is the PH domain. 2 consecutive DEP domains span residues 390–464 (CRQG…RFRY) and 491–566 (SLFT…FFSD). PDZ domains are found at residues 592–671 (KSLL…VLVS) and 677–754 (TVKI…QDSI). Residues 1581–1606 (GVRDRTPQSAPRLYKLCEPPPPAGEE) form a disordered region.

As to quaternary structure, interacts with RAC1. In terms of tissue distribution, isoform 1 is highly expressed in skeletal muscle, heart and placenta, absent from peripheral blood leukocytes. Isoform 2 is expressed in skeletal muscle, kidney, small intestine, and placenta. Isoform 3 is expressed in the heart.

In terms of biological role, functions as a RAC1 guanine nucleotide exchange factor (GEF), activating Rac proteins by exchanging bound GDP for free GTP. Its activity is synergistically activated by phosphatidylinositol 3,4,5-trisphosphate and the beta gamma subunits of heterotrimeric G protein. Mediates the activation of RAC1 in a PI3K-dependent manner. May be an important mediator of Rac signaling, acting directly downstream of both G protein-coupled receptors and phosphoinositide 3-kinase. The sequence is that of Phosphatidylinositol 3,4,5-trisphosphate-dependent Rac exchanger 2 protein from Homo sapiens (Human).